The chain runs to 206 residues: Sperm acrosome developmental regulator (206 aa).

The interval R180–L206 is disordered.

Expressed in sperm (at protein level).

It is found in the cytoplasmic vesicle. The protein localises to the secretory vesicle. The protein resides in the acrosome. Functionally, may play a role in acrosome formation and nucleus shaping during spermiogenesis. The polypeptide is Sperm acrosome developmental regulator (Homo sapiens (Human)).